A 349-amino-acid chain; its full sequence is Phenylalanine--tRNA ligase alpha subunit (349 aa).

Glu-258 provides a ligand contact to Mg(2+).

The protein belongs to the class-II aminoacyl-tRNA synthetase family. Phe-tRNA synthetase alpha subunit type 1 subfamily. In terms of assembly, tetramer of two alpha and two beta subunits. The cofactor is Mg(2+).

The protein localises to the cytoplasm. It catalyses the reaction tRNA(Phe) + L-phenylalanine + ATP = L-phenylalanyl-tRNA(Phe) + AMP + diphosphate + H(+). This Rickettsia conorii (strain ATCC VR-613 / Malish 7) protein is Phenylalanine--tRNA ligase alpha subunit.